The sequence spans 102 residues: Small ribosomal subunit protein uS10 (102 aa).

The protein belongs to the universal ribosomal protein uS10 family. In terms of assembly, part of the 30S ribosomal subunit.

Functionally, involved in the binding of tRNA to the ribosomes. This is Small ribosomal subunit protein uS10 from Syntrophus aciditrophicus (strain SB).